Here is a 286-residue protein sequence, read N- to C-terminus: Elongation factor Ts (286 aa).

The involved in Mg(2+) ion dislocation from EF-Tu stretch occupies residues 82-85; the sequence is TDFV.

Belongs to the EF-Ts family.

The protein resides in the cytoplasm. In terms of biological role, associates with the EF-Tu.GDP complex and induces the exchange of GDP to GTP. It remains bound to the aminoacyl-tRNA.EF-Tu.GTP complex up to the GTP hydrolysis stage on the ribosome. The sequence is that of Elongation factor Ts from Hamiltonella defensa subsp. Acyrthosiphon pisum (strain 5AT).